Reading from the N-terminus, the 286-residue chain is uncharacterized protein (286 aa).

A helical transmembrane segment spans residues 8-28 (PLSGFISSLIWWLLFFYLIMA).

It to M.jannaschii MJ1495.

Its subcellular location is the membrane. This is an uncharacterized protein from Methanocaldococcus jannaschii (strain ATCC 43067 / DSM 2661 / JAL-1 / JCM 10045 / NBRC 100440) (Methanococcus jannaschii).